The following is a 298-amino-acid chain: ATP-dependent Clp protease proteolytic subunit 5, chloroplastic (298 aa).

Residues 1–100 constitute a chloroplast transit peptide; that stretch reads MAHACVSTSA…SSPYFPAYAQ (100 aa). N-acetylglycine is present on Gly-101. Catalysis depends on Ser-193, which acts as the Nucleophile. His-218 is a catalytic residue.

It belongs to the peptidase S14 family. As to quaternary structure, component of the chloroplastic Clp protease core complex which consist of at least 16 proteins: CLPP4 (3 copies), CLPP5 (3 copies), CLPR4 (2 copies), ClpP1 (1 copy), CLPP6 (1 copy), CLPR2 (1 copy), CLPT1 (1 copy), CLPT2 (1 copy) and 3 copies of CLPP3 and/or CLPR1 and/or CLPR3. The core complex is organized in two heptameric rings, one containing CLPP3,4,5,6 in a 1:2:3:1 ratio and the other CLPP1 and CLPR1,2,3,4 in a 3:1:1:1:1 ratio. Interacts with CHIP. Post-translationally, ubiquitinated in vitro by CHIP. Mostly expressed in leaves. Also detected in stems, and to a lower extent, in roots (at protein level).

It is found in the plastid. It localises to the chloroplast stroma. It catalyses the reaction Hydrolysis of proteins to small peptides in the presence of ATP and magnesium. alpha-casein is the usual test substrate. In the absence of ATP, only oligopeptides shorter than five residues are hydrolyzed (such as succinyl-Leu-Tyr-|-NHMec, and Leu-Tyr-Leu-|-Tyr-Trp, in which cleavage of the -Tyr-|-Leu- and -Tyr-|-Trp bonds also occurs).. Cleaves peptides in various proteins in a process that requires ATP hydrolysis. Has a chymotrypsin-like activity. Plays a major role in the degradation of misfolded proteins. The sequence is that of ATP-dependent Clp protease proteolytic subunit 5, chloroplastic from Arabidopsis thaliana (Mouse-ear cress).